The sequence spans 262 residues: Indole-3-glycerol phosphate synthase (262 aa).

The protein belongs to the TrpC family.

It carries out the reaction 1-(2-carboxyphenylamino)-1-deoxy-D-ribulose 5-phosphate + H(+) = (1S,2R)-1-C-(indol-3-yl)glycerol 3-phosphate + CO2 + H2O. Its pathway is amino-acid biosynthesis; L-tryptophan biosynthesis; L-tryptophan from chorismate: step 4/5. The sequence is that of Indole-3-glycerol phosphate synthase from Dechloromonas aromatica (strain RCB).